A 544-amino-acid chain; its full sequence is ATP synthase subunit alpha (544 aa).

173-180 (GDRQTGKT) is an ATP binding site. The interval 513 to 544 (GSDGQIIGGGEPESDGEDVDVEQEQIVRQKRG) is disordered. Residues 524 to 535 (PESDGEDVDVEQ) show a composition bias toward acidic residues.

The protein belongs to the ATPase alpha/beta chains family. F-type ATPases have 2 components, CF(1) - the catalytic core - and CF(0) - the membrane proton channel. CF(1) has five subunits: alpha(3), beta(3), gamma(1), delta(1), epsilon(1). CF(0) has three main subunits: a(1), b(2) and c(9-12). The alpha and beta chains form an alternating ring which encloses part of the gamma chain. CF(1) is attached to CF(0) by a central stalk formed by the gamma and epsilon chains, while a peripheral stalk is formed by the delta and b chains.

Its subcellular location is the cell membrane. It carries out the reaction ATP + H2O + 4 H(+)(in) = ADP + phosphate + 5 H(+)(out). In terms of biological role, produces ATP from ADP in the presence of a proton gradient across the membrane. The alpha chain is a regulatory subunit. This Beutenbergia cavernae (strain ATCC BAA-8 / DSM 12333 / CCUG 43141 / JCM 11478 / NBRC 16432 / NCIMB 13614 / HKI 0122) protein is ATP synthase subunit alpha.